A 333-amino-acid polypeptide reads, in one-letter code: Ribosomal RNA small subunit methyltransferase H (333 aa).

S-adenosyl-L-methionine-binding positions include Gly-34 to His-36, Asp-59, Phe-86, Asp-112, and Gln-119.

It belongs to the methyltransferase superfamily. RsmH family.

Its subcellular location is the cytoplasm. The catalysed reaction is cytidine(1402) in 16S rRNA + S-adenosyl-L-methionine = N(4)-methylcytidine(1402) in 16S rRNA + S-adenosyl-L-homocysteine + H(+). Its function is as follows. Specifically methylates the N4 position of cytidine in position 1402 (C1402) of 16S rRNA. In Prosthecochloris aestuarii (strain DSM 271 / SK 413), this protein is Ribosomal RNA small subunit methyltransferase H.